Here is a 598-residue protein sequence, read N- to C-terminus: Elongation factor 4 (598 aa).

The 183-residue stretch at serine 5–threonine 187 folds into the tr-type G domain. Residues aspartate 17–threonine 22 and asparagine 134–aspartate 137 contribute to the GTP site.

This sequence belongs to the TRAFAC class translation factor GTPase superfamily. Classic translation factor GTPase family. LepA subfamily.

The protein resides in the cell inner membrane. The enzyme catalyses GTP + H2O = GDP + phosphate + H(+). Functionally, required for accurate and efficient protein synthesis under certain stress conditions. May act as a fidelity factor of the translation reaction, by catalyzing a one-codon backward translocation of tRNAs on improperly translocated ribosomes. Back-translocation proceeds from a post-translocation (POST) complex to a pre-translocation (PRE) complex, thus giving elongation factor G a second chance to translocate the tRNAs correctly. Binds to ribosomes in a GTP-dependent manner. This is Elongation factor 4 from Pseudomonas syringae pv. syringae (strain B728a).